The following is a 272-amino-acid chain: Insulin-like growth factor-binding protein 1 (272 aa).

The N-terminal stretch at 1-25 is a signal peptide; sequence MPEFLTVVSWPFLILLSFQVRVVAG. The 82-residue stretch at 28–109 folds into the IGFBP N-terminal domain; it reads QPWHCAPCTA…TRGQGACVLE (82 aa). Cystine bridges form between Cys-32–Cys-59, Cys-35–Cys-61, Cys-43–Cys-62, Cys-50–Cys-65, Cys-73–Cys-86, and Cys-80–Cys-106. A disordered region spans residues 115–143; that stretch reads TSSLSGSQHEEAKAAVASEDELAESPEMT. Residues 132 to 143 show a composition bias toward acidic residues; it reads SEDELAESPEMT. 3 positions are modified to phosphoserine: Ser-139, Ser-157, and Ser-169. Position 170 is a phosphothreonine (Thr-170). Tyr-171 is subject to Phosphotyrosine. In terms of domain architecture, Thyroglobulin type-1 spans 186–264; that stretch reads KEPCQRELYK…SLETRGDPNC (79 aa). 3 disulfide bridges follow: Cys-189–Cys-219, Cys-230–Cys-241, and Cys-243–Cys-264. Ser-255 bears the Phosphoserine mark. Positions 259 to 261 match the Cell attachment site motif; that stretch reads RGD.

In terms of assembly, binds equally well IGF1 and IGF2. Interacts with integrin ITGA5:ITGB1. Interacts with VHL; this interaction inhibits HIF1A degradation.

The protein resides in the secreted. Multifunctional protein that plays a critical role in regulating the availability of IGFs such as IGF1 and IGF2 to their receptors and thereby regulates IGF-mediated cellular processes including cell migration, proliferation, differentiation or apoptosis in a cell-type specific manner. Also plays a positive role in cell migration by interacting with integrin ITGA5:ITGB1 through its RGD motif. Mechanistically, binding to integrins leads to activation of focal adhesion kinase/PTK2 and stimulation of the mitogen-activated protein kinase (MAPK) pathway. Regulates cardiomyocyte apoptosis by suppressing HIF-1alpha/HIF1A ubiquitination and subsequent degradation. This is Insulin-like growth factor-binding protein 1 (Igfbp1) from Rattus norvegicus (Rat).